The following is a 127-amino-acid chain: MRHRMKRNKLNRYGSHRRSLMRNLAKEIIEHGTIMTTTVKAKVGKEYIEKLITKAVKAYKIKDENKEESIALRRQLFAELGDRKLVNKLVDEIAPKYTGRNGGYTRVIKVGQRRGDGAEVSVLQIVE.

The protein belongs to the bacterial ribosomal protein bL17 family. In terms of assembly, part of the 50S ribosomal subunit. Contacts protein L32.

In Fervidobacterium nodosum (strain ATCC 35602 / DSM 5306 / Rt17-B1), this protein is Large ribosomal subunit protein bL17.